The chain runs to 1025 residues: Putative receptor-like protein kinase At3g47110 (1025 aa).

The N-terminal stretch at 1–30 (MGVPCIVMRLILVSALLVSVSLEHSDMVCA) is a signal peptide. Residues 31–653 (QTIRLTEETD…LPRRHSSVRK (623 aa)) lie on the Extracellular side of the membrane. N63 and N103 each carry an N-linked (GlcNAc...) asparagine glycan. 10 LRR repeats span residues 104 to 128 (LSFL…VGNL), 130 to 151 (RLQY…VLSN), 152 to 175 (CSSL…EFGS), 176 to 200 (LSKL…LGNL), 202 to 224 (SLQM…IARL), 226 to 248 (QMIF…IYNL), 249 to 271 (SSLI…DFGS), 273 to 297 (LPNL…LSNI), 298 to 323 (SSLR…RLQN), and 325 to 344 (LLLG…DLDF). 2 N-linked (GlcNAc...) asparagine glycosylation sites follow: N135 and N151. 2 N-linked (GlcNAc...) asparagine glycosylation sites follow: N188 and N199. The N-linked (GlcNAc...) asparagine glycan is linked to N247. N296 carries an N-linked (GlcNAc...) asparagine glycan. N331, N336, N350, and N374 each carry an N-linked (GlcNAc...) asparagine glycan. 11 LRR repeats span residues 351–374 (CSQL…FIAN), 376–400 (STQL…IGNL), 401–424 (VSLQ…LGEL), 426–448 (ELRK…LGNI), 449–472 (SGLT…LGSC), 473–496 (SYLL…LMEL), 498–520 (SLVV…IGKL), 521–544 (KFLL…LANC), 546–567 (SLEF…IRGL), 568–593 (TGLR…NFSK), and 595–616 (QNLN…VFRN). N-linked (GlcNAc...) asparagine glycans are attached at residues N447, N458, N486, and N503. Residues N579, N590, N598, and N616 are each glycosylated (N-linked (GlcNAc...) asparagine). Residues 654-674 (IITICVSAVMAALLLLCLCVV) form a helical membrane-spanning segment. The Cytoplasmic portion of the chain corresponds to 675 to 1025 (YLCWYKLRVK…RESFFRDEET (351 aa)). Position 716 is a phosphothreonine (T716). A Protein kinase domain is found at 719 to 1020 (FSSSNLIGSG…KLVSIRESFF (302 aa)). Residues 725–733 (IGSGNFGAV) and K748 each bind ATP. Phosphotyrosine is present on residues Y798 and Y843. Catalysis depends on D856, which acts as the Proton acceptor. Residue Y904 is modified to Phosphotyrosine.

This sequence belongs to the protein kinase superfamily. Ser/Thr protein kinase family.

The protein localises to the cell membrane. It catalyses the reaction L-seryl-[protein] + ATP = O-phospho-L-seryl-[protein] + ADP + H(+). The catalysed reaction is L-threonyl-[protein] + ATP = O-phospho-L-threonyl-[protein] + ADP + H(+). This is Putative receptor-like protein kinase At3g47110 from Arabidopsis thaliana (Mouse-ear cress).